Here is a 326-residue protein sequence, read N- to C-terminus: ATP synthase gamma chain (326 aa).

This sequence belongs to the ATPase gamma chain family. As to quaternary structure, F-type ATPases have 2 components, CF(1) - the catalytic core - and CF(0) - the membrane proton channel. CF(1) has five subunits: alpha(3), beta(3), gamma(1), delta(1), epsilon(1). CF(0) has three main subunits: a, b and c.

It localises to the cell membrane. In terms of biological role, produces ATP from ADP in the presence of a proton gradient across the membrane. The gamma chain is believed to be important in regulating ATPase activity and the flow of protons through the CF(0) complex. In Rhodococcus opacus (strain B4), this protein is ATP synthase gamma chain.